Reading from the N-terminus, the 231-residue chain is 7-cyano-7-deazaguanine synthase (231 aa).

Position 8–18 (8–18 (FSGGQDSTTCL)) interacts with ATP. Positions 188, 197, 200, and 203 each coordinate Zn(2+).

The protein belongs to the QueC family. Requires Zn(2+) as cofactor.

The enzyme catalyses 7-carboxy-7-deazaguanine + NH4(+) + ATP = 7-cyano-7-deazaguanine + ADP + phosphate + H2O + H(+). It participates in purine metabolism; 7-cyano-7-deazaguanine biosynthesis. Catalyzes the ATP-dependent conversion of 7-carboxy-7-deazaguanine (CDG) to 7-cyano-7-deazaguanine (preQ(0)). In Shigella dysenteriae serotype 1 (strain Sd197), this protein is 7-cyano-7-deazaguanine synthase.